The chain runs to 257 residues: Dihydroorotate dehydrogenase B (NAD(+)), electron transfer subunit (257 aa).

The 100-residue stretch at 2-101 (IRQEKMRVVS…LGPIGNGFPV (100 aa)) folds into the FAD-binding FR-type domain. FAD-binding positions include 52-55 (RPIS), 69-71 (IYR), and 76-77 (GT). Positions 220, 225, 228, and 244 each coordinate [2Fe-2S] cluster.

It belongs to the PyrK family. In terms of assembly, heterotetramer of 2 PyrK and 2 PyrD type B subunits. It depends on [2Fe-2S] cluster as a cofactor. Requires FAD as cofactor.

It functions in the pathway pyrimidine metabolism; UMP biosynthesis via de novo pathway; orotate from (S)-dihydroorotate (NAD(+) route): step 1/1. Responsible for channeling the electrons from the oxidation of dihydroorotate from the FMN redox center in the PyrD type B subunit to the ultimate electron acceptor NAD(+). The protein is Dihydroorotate dehydrogenase B (NAD(+)), electron transfer subunit of Lysinibacillus sphaericus (strain C3-41).